Here is a 351-residue protein sequence, read N- to C-terminus: DNA polymerase IV (351 aa).

The 182-residue stretch at 4–185 folds into the UmuC domain; the sequence is IIHIDMDCFY…LPLRKIPGVG (182 aa). Mg(2+)-binding residues include Asp8 and Asp103. Glu104 is a catalytic residue.

This sequence belongs to the DNA polymerase type-Y family. In terms of assembly, monomer. Requires Mg(2+) as cofactor.

Its subcellular location is the cytoplasm. It catalyses the reaction DNA(n) + a 2'-deoxyribonucleoside 5'-triphosphate = DNA(n+1) + diphosphate. Poorly processive, error-prone DNA polymerase involved in untargeted mutagenesis. Copies undamaged DNA at stalled replication forks, which arise in vivo from mismatched or misaligned primer ends. These misaligned primers can be extended by PolIV. Exhibits no 3'-5' exonuclease (proofreading) activity. May be involved in translesional synthesis, in conjunction with the beta clamp from PolIII. This is DNA polymerase IV from Photorhabdus laumondii subsp. laumondii (strain DSM 15139 / CIP 105565 / TT01) (Photorhabdus luminescens subsp. laumondii).